Here is a 152-residue protein sequence, read N- to C-terminus: SsrA-binding protein (152 aa).

The protein belongs to the SmpB family.

The protein localises to the cytoplasm. Its function is as follows. Required for rescue of stalled ribosomes mediated by trans-translation. Binds to transfer-messenger RNA (tmRNA), required for stable association of tmRNA with ribosomes. tmRNA and SmpB together mimic tRNA shape, replacing the anticodon stem-loop with SmpB. tmRNA is encoded by the ssrA gene; the 2 termini fold to resemble tRNA(Ala) and it encodes a 'tag peptide', a short internal open reading frame. During trans-translation Ala-aminoacylated tmRNA acts like a tRNA, entering the A-site of stalled ribosomes, displacing the stalled mRNA. The ribosome then switches to translate the ORF on the tmRNA; the nascent peptide is terminated with the 'tag peptide' encoded by the tmRNA and targeted for degradation. The ribosome is freed to recommence translation, which seems to be the essential function of trans-translation. The protein is SsrA-binding protein of Rickettsia typhi (strain ATCC VR-144 / Wilmington).